Consider the following 182-residue polypeptide: Nucleoid-associated protein At2g24020, chloroplastic (182 aa).

A chloroplast-targeting transit peptide spans 1–48 (MASMAATTNFTKSMLFPFSHVSGNASLNSQRRTWPKQYKSKNGYRSLR).

Belongs to the YbaB/EbfC family. In terms of assembly, homodimer. Interacts with ALB3 and ALB4.

It is found in the plastid. The protein resides in the chloroplast stroma. Participates with ALB4 in thylakoid protein targeting. May function with specific subset of thylakoidal proteins. Binds to DNA and alters its conformation. May be involved in regulation of gene expression, nucleoid organization and DNA protection. The chain is Nucleoid-associated protein At2g24020, chloroplastic from Arabidopsis thaliana (Mouse-ear cress).